We begin with the raw amino-acid sequence, 223 residues long: Nicotinamide/nicotinic acid mononucleotide adenylyltransferase 2 (223 aa).

NAD(+) is bound by residues Ser-11 and Phe-12. Residue His-19 participates in ATP binding. Trp-87, Thr-90, Gly-116, Asp-118, Leu-133, Trp-134, and Arg-153 together coordinate NAD(+). ATP is bound at residue 190–191 (TR).

The protein belongs to the eukaryotic NMN adenylyltransferase family. The cofactor is a divalent metal cation.

The catalysed reaction is beta-nicotinamide D-ribonucleotide + ATP + H(+) = diphosphate + NAD(+). It catalyses the reaction nicotinate beta-D-ribonucleotide + ATP + H(+) = deamido-NAD(+) + diphosphate. The protein operates within cofactor biosynthesis; NAD(+) biosynthesis; deamido-NAD(+) from nicotinate D-ribonucleotide: step 1/1. It participates in cofactor biosynthesis; NAD(+) biosynthesis; NAD(+) from nicotinamide D-ribonucleotide: step 1/1. In terms of biological role, catalyzes the formation of NAD(+) from nicotinamide mononucleotide (NMN) and ATP. Can also use the deamidated form; nicotinic acid mononucleotide (NaMN) as substrate. This chain is Nicotinamide/nicotinic acid mononucleotide adenylyltransferase 2, found in Caenorhabditis elegans.